The chain runs to 620 residues: Chaperone protein HscA homolog (620 aa).

Belongs to the heat shock protein 70 family.

Chaperone involved in the maturation of iron-sulfur cluster-containing proteins. Has a low intrinsic ATPase activity which is markedly stimulated by HscB. In Acinetobacter baumannii (strain SDF), this protein is Chaperone protein HscA homolog.